An 825-amino-acid chain; its full sequence is Exocyst complex component SEC10a (825 aa).

Positions arginine 244–serine 266 form a coiled coil.

Belongs to the SEC10 family. The exocyst complex is composed of SEC3, SEC5, SEC6, SEC8, SEC10, EXO70A1 and EXO84B. Interacts with EXO84B. Binds to EXO70E2. Binds directly to B1L. Expressed in seedlings, roots, leaves and flowers.

The protein resides in the cytoplasm. It localises to the cytosol. Its subcellular location is the secreted. The protein localises to the extracellular exosome. Component of the exocyst complex involved in the docking of exocytic vesicles with fusion sites on the plasma membrane during regulated or polarized secretion. Involved in polarized cell growth and organ morphogenesis. During cytokinesis, involved in cell plate initiation, cell plate maturation and formation of new primary cell wall. In Arabidopsis thaliana (Mouse-ear cress), this protein is Exocyst complex component SEC10a.